The sequence spans 86 residues: Small ribosomal subunit protein bS16 (86 aa).

Belongs to the bacterial ribosomal protein bS16 family.

This chain is Small ribosomal subunit protein bS16, found in Borrelia garinii subsp. bavariensis (strain ATCC BAA-2496 / DSM 23469 / PBi) (Borreliella bavariensis).